A 222-amino-acid polypeptide reads, in one-letter code: 26S proteasome non-ATPase regulatory subunit 9 (222 aa).

The PDZ domain maps to 108–194 (QARDMAEARE…KPLNVTVIRR (87 aa)). Ser-128 carries the phosphoserine modification.

It belongs to the proteasome subunit p27 family. As to quaternary structure, interacts with PSMC3. Part of a transient complex (modulator) containing PSMD9, PSMC6 and PSMC3 formed during the assembly of the 26S proteasome.

Acts as a chaperone during the assembly of the 26S proteasome, specifically of the base subcomplex of the PA700/19S regulatory complex (RC). During the base subcomplex assembly is part of an intermediate PSMD9:PSMC6:PSMC3 module, also known as modulator trimer complex; PSMD9 is released during the further base assembly process. The chain is 26S proteasome non-ATPase regulatory subunit 9 (Psmd9) from Mus musculus (Mouse).